The sequence spans 196 residues: Small ribosomal subunit protein uS4c (196 aa).

The tract at residues 22 to 42 is disordered; sequence TRKTPKSGSNPKKKFHSGKKE. Positions 89-169 constitute an S4 RNA-binding domain; that stretch reads MRLDNILFRL…LPKHLTIDTL (81 aa).

Belongs to the universal ribosomal protein uS4 family. In terms of assembly, part of the 30S ribosomal subunit. Contacts protein S5. The interaction surface between S4 and S5 is involved in control of translational fidelity.

It localises to the plastid. The protein localises to the chloroplast. Its function is as follows. One of the primary rRNA binding proteins, it binds directly to 16S rRNA where it nucleates assembly of the body of the 30S subunit. With S5 and S12 plays an important role in translational accuracy. This Melica altissima (Siberian melic grass) protein is Small ribosomal subunit protein uS4c (rps4).